Here is a 466-residue protein sequence, read N- to C-terminus: Argininosuccinate lyase (466 aa).

Belongs to the lyase 1 family. Argininosuccinate lyase subfamily.

The protein localises to the cytoplasm. It carries out the reaction 2-(N(omega)-L-arginino)succinate = fumarate + L-arginine. It functions in the pathway amino-acid biosynthesis; L-arginine biosynthesis; L-arginine from L-ornithine and carbamoyl phosphate: step 3/3. This is Argininosuccinate lyase from Brucella abortus (strain S19).